A 72-amino-acid polypeptide reads, in one-letter code: uncharacterized protein (72 aa).

Residues 27–55 adopt a coiled-coil conformation; the sequence is YTQNLINELQEARDSINDLQRAHERLKLV.

This is an uncharacterized protein from Schizosaccharomyces pombe (strain 972 / ATCC 24843) (Fission yeast).